The sequence spans 115 residues: Tyrosine-protein phosphatase 18 (115 aa).

One can recognise a Tyrosine-protein phosphatase domain in the interval 1–115; that stretch reads WLMIVEQKCR…ETGSDAPMVV (115 aa). Asp-83 serves as a coordination point for substrate.

It belongs to the protein-tyrosine phosphatase family.

The enzyme catalyses O-phospho-L-tyrosyl-[protein] + H2O = L-tyrosyl-[protein] + phosphate. The chain is Tyrosine-protein phosphatase 18 (STY-18) from Styela plicata (Wrinkled sea squirt).